The following is a 612-amino-acid chain: uncharacterized protein (612 aa).

Disordered stretches follow at residues 46–113 (QQPQ…MVTP), 129–185 (QQYQ…TPTY), 313–360 (TKDG…GSTM), 457–488 (FSIS…SGYG), and 593–612 (NNTN…VVTI). Over residues 58–102 (HQQIPISTQSTPNSTSSTTTTTTTTTSTTTAPTSNSKKSKTTPSN) the composition is skewed to low complexity. Polar residues-rich tracts occupy residues 103-113 (GNKPTSGMVTP) and 129-138 (QQYQPNSQLQ). The segment covering 143-169 (IIKKSSLSTTPNNINNNNNNNNNTNTI) has biased composition (low complexity). A compositionally biased stretch (polar residues) spans 175 to 185 (GGNNSAPTPTY). Positions 323–359 (TTSSTSTSSSATSTTSSSTSSTTTTSSTSNSSTPGST) are enriched in low complexity.

This is an uncharacterized protein from Dictyostelium discoideum (Social amoeba).